The primary structure comprises 449 residues: Phosphoglucosamine mutase (449 aa).

Catalysis depends on Ser-104, which acts as the Phosphoserine intermediate. Mg(2+)-binding residues include Ser-104, Asp-243, Asp-245, and Asp-247. Ser-104 carries the post-translational modification Phosphoserine.

The protein belongs to the phosphohexose mutase family. Requires Mg(2+) as cofactor. Post-translationally, activated by phosphorylation.

It catalyses the reaction alpha-D-glucosamine 1-phosphate = D-glucosamine 6-phosphate. Its function is as follows. Catalyzes the conversion of glucosamine-6-phosphate to glucosamine-1-phosphate. The protein is Phosphoglucosamine mutase of Xanthomonas euvesicatoria pv. vesicatoria (strain 85-10) (Xanthomonas campestris pv. vesicatoria).